A 205-amino-acid chain; its full sequence is Small ribosomal subunit protein uS4 (205 aa).

The segment at 26 to 47 (PVNKREYGPGQHGQRRKQKPSD) is disordered. Positions 94–154 (RRLDAVVYRL…EKSKHLAIVL (61 aa)) constitute an S4 RNA-binding domain.

This sequence belongs to the universal ribosomal protein uS4 family. In terms of assembly, part of the 30S ribosomal subunit. Contacts protein S5. The interaction surface between S4 and S5 is involved in control of translational fidelity.

In terms of biological role, one of the primary rRNA binding proteins, it binds directly to 16S rRNA where it nucleates assembly of the body of the 30S subunit. Its function is as follows. With S5 and S12 plays an important role in translational accuracy. The polypeptide is Small ribosomal subunit protein uS4 (Gluconacetobacter diazotrophicus (strain ATCC 49037 / DSM 5601 / CCUG 37298 / CIP 103539 / LMG 7603 / PAl5)).